Reading from the N-terminus, the 625-residue chain is Complex I assembly factor ACAD9, mitochondrial (625 aa).

The N-terminal 41 residues, 1–41 (MSGYVLFSRGATAAAAAARASRVLRVFTERRRTLHTSLQSC), are a transit peptide targeting the mitochondrion. Position 45 is an N6-acetyllysine (Lys45). N6-succinyllysine is present on Lys96. Glu430 functions as the Proton acceptor in the catalytic mechanism. Thr482 carries the post-translational modification Phosphothreonine. Lys525 is subject to N6-acetyllysine; alternate. Lys525 is subject to N6-succinyllysine; alternate.

This sequence belongs to the acyl-CoA dehydrogenase family. Homodimer. Interacts with NDUFAF1 and ECSIT. Part of the mitochondrial complex I assembly/MCIA complex that comprises at least the core subunits TMEM126B, NDUFAF1, ECSIT and ACAD9 and complement subunits such as COA1 and TMEM186. Interacts with TMEM70 and TMEM242. The cofactor is FAD.

The protein localises to the mitochondrion inner membrane. The enzyme catalyses eicosanoyl-CoA + oxidized [electron-transfer flavoprotein] + H(+) = (2E)-eicosenoyl-CoA + reduced [electron-transfer flavoprotein]. It catalyses the reaction octadecanoyl-CoA + oxidized [electron-transfer flavoprotein] + H(+) = (2E)-octadecenoyl-CoA + reduced [electron-transfer flavoprotein]. The catalysed reaction is oxidized [electron-transfer flavoprotein] + hexadecanoyl-CoA + H(+) = (2E)-hexadecenoyl-CoA + reduced [electron-transfer flavoprotein]. It carries out the reaction decanoyl-CoA + oxidized [electron-transfer flavoprotein] + H(+) = (2E)-decenoyl-CoA + reduced [electron-transfer flavoprotein]. The enzyme catalyses nonanoyl-CoA + oxidized [electron-transfer flavoprotein] + H(+) = (2E)-nonenoyl-CoA + reduced [electron-transfer flavoprotein]. It catalyses the reaction pentadecanoyl-CoA + oxidized [electron-transfer flavoprotein] + H(+) = (2E)-pentadecenoyl-CoA + reduced [electron-transfer flavoprotein]. The catalysed reaction is undecanoyl-CoA + oxidized [electron-transfer flavoprotein] + H(+) = trans-2-undecenoyl-CoA + reduced [electron-transfer flavoprotein]. It carries out the reaction (9Z)-hexadecenoyl-CoA + oxidized [electron-transfer flavoprotein] + H(+) = (2E,9Z)-hexadecadienoyl-CoA + reduced [electron-transfer flavoprotein]. The enzyme catalyses heptadecanoyl-CoA + oxidized [electron-transfer flavoprotein] + H(+) = trans-2-heptadecenoyl-CoA + reduced [electron-transfer flavoprotein]. It catalyses the reaction (9E)-octadecenoyl-CoA + oxidized [electron-transfer flavoprotein] + H(+) = (2E,9E)-octadecadienoyl-CoA + reduced [electron-transfer flavoprotein]. The catalysed reaction is oxidized [electron-transfer flavoprotein] + (9Z)-octadecenoyl-CoA + H(+) = (2E,9Z)-octadecadienoyl-CoA + reduced [electron-transfer flavoprotein]. It carries out the reaction (9Z,12Z)-octadecadienoyl-CoA + oxidized [electron-transfer flavoprotein] + H(+) = (2E,9Z,12Z)-octadecatrienoyl-CoA + reduced [electron-transfer flavoprotein]. The enzyme catalyses (4Z,7Z,10Z,13Z,16Z,19Z)-docosahexaenoyl-CoA + oxidized [electron-transfer flavoprotein] + H(+) = (2E,4Z,7Z,10Z,13Z,16Z,19Z)-docosaheptaenoyl-CoA + reduced [electron-transfer flavoprotein]. It catalyses the reaction tetradecanoyl-CoA + oxidized [electron-transfer flavoprotein] + H(+) = (2E)-tetradecenoyl-CoA + reduced [electron-transfer flavoprotein]. As part of the MCIA complex, primarily participates in the assembly of the mitochondrial complex I and therefore plays a role in oxidative phosphorylation. This moonlighting protein also has a dehydrogenase activity toward a broad range of substrates with greater specificity for long-chain unsaturated acyl-CoAs. However, in vivo, it does not seem to play a primary role in fatty acid oxidation. In addition, the function in complex I assembly is independent of the dehydrogenase activity of the protein. This chain is Complex I assembly factor ACAD9, mitochondrial, found in Rattus norvegicus (Rat).